A 306-amino-acid polypeptide reads, in one-letter code: Glutathione transport system permease protein GsiC (306 aa).

At 1-8 (MLNYVIKR) the chain is on the cytoplasmic side. The chain crosses the membrane as a helical span at residues 9-29 (LLGLIPTLFIVSVLVFLFVHM). The Periplasmic portion of the chain corresponds to 30 to 102 (LPGDPARLIA…SRFMPTLWLT (73 aa)). Residues 95–292 (FMPTLWLTIT…LEFILINLVV (198 aa)) enclose the ABC transmembrane type-1 domain. Residues 103–123 (ITSMVWAVIFGMAAGIIAAVW) form a helical membrane-spanning segment. At 124–134 (RNRWPDRLSMT) the chain is on the cytoplasmic side. The chain crosses the membrane as a helical span at residues 135–155 (IAVSGISFPAFALGMFLIQVF). Topologically, residues 156–168 (SVELGWLPTVGAD) are periplasmic. A helical transmembrane segment spans residues 169–189 (SWQHYILPSLTLGAAVAAVMA). Over 190-228 (RFTRASFVDVLSEDYMRTARAKGVSETWVVLKHGLRNAM) the chain is Cytoplasmic. The chain crosses the membrane as a helical span at residues 229 to 249 (IPVVTMMGLQFGFLLGGSIVV). The Periplasmic portion of the chain corresponds to 250 to 277 (EKVFNWPGLGRLLVDSVEMRDYPVIQAE). Residues 278–298 (ILLFSLEFILINLVVDVLYAA) form a helical membrane-spanning segment. Residues 299–306 (INPAIRYK) lie on the Cytoplasmic side of the membrane.

This sequence belongs to the binding-protein-dependent transport system permease family. In terms of assembly, the complex is composed of two ATP-binding proteins (GsiA), two transmembrane proteins (GsiC and GsiD) and a solute-binding protein (GsiB).

Its subcellular location is the cell inner membrane. Functionally, part of the ABC transporter complex GsiABCD involved in glutathione import. Probably responsible for the translocation of the substrate across the membrane. The chain is Glutathione transport system permease protein GsiC from Shigella flexneri serotype 5b (strain 8401).